The chain runs to 242 residues: ATP-dependent dethiobiotin synthetase BioD (242 aa).

Residue 12 to 17 (EVGKTV) coordinates ATP. T16 serves as a coordination point for Mg(2+). The active site involves K37. Residue S41 participates in substrate binding. Residues D51 and 112–115 (EGAG) each bind ATP. Residues D51 and E112 each coordinate Mg(2+).

This sequence belongs to the dethiobiotin synthetase family. In terms of assembly, homodimer. Mg(2+) serves as cofactor.

The protein localises to the cytoplasm. It catalyses the reaction (7R,8S)-7,8-diammoniononanoate + CO2 + ATP = (4R,5S)-dethiobiotin + ADP + phosphate + 3 H(+). It functions in the pathway cofactor biosynthesis; biotin biosynthesis; biotin from 7,8-diaminononanoate: step 1/2. Catalyzes a mechanistically unusual reaction, the ATP-dependent insertion of CO2 between the N7 and N8 nitrogen atoms of 7,8-diaminopelargonic acid (DAPA, also called 7,8-diammoniononanoate) to form a ureido ring. This is ATP-dependent dethiobiotin synthetase BioD from Bacillus cereus (strain B4264).